The sequence spans 105 residues: UPF0145 protein Aflv_1588 (105 aa).

Belongs to the UPF0145 family.

This chain is UPF0145 protein Aflv_1588, found in Anoxybacillus flavithermus (strain DSM 21510 / WK1).